The chain runs to 819 residues: Leucine--tRNA ligase (819 aa).

The short motif at 51-61 (PYPSGNLHIGH) is the 'HIGH' region element. A 'KMSKS' region motif is present at residues 586 to 590 (KMSKS). K589 contacts ATP.

Belongs to the class-I aminoacyl-tRNA synthetase family.

It is found in the cytoplasm. It carries out the reaction tRNA(Leu) + L-leucine + ATP = L-leucyl-tRNA(Leu) + AMP + diphosphate. This is Leucine--tRNA ligase from Deinococcus geothermalis (strain DSM 11300 / CIP 105573 / AG-3a).